The sequence spans 208 residues: MELKVLNIQGAETGEVVTLNDDIFAVEVSEHAMYLDVKAILANRRQGTHKTKTRAEVRGGGKKPYRQKGTGNARQGSSRSPIMVGGGTIFGPQPRSYEQKVNRKVKQLARRSALSSKAAAGQIVVVEDFSLESIKTRPVADMLKNLGLAEKKTLLMMPHYDNVVSTSGRNIEKLNIQVADQASTYDILNSQAVLFQKAALQKIEETLG.

The disordered stretch occupies residues 46–97; the sequence is QGTHKTKTRAEVRGGGKKPYRQKGTGNARQGSSRSPIMVGGGTIFGPQPRSY. Positions 69-80 are enriched in polar residues; it reads GTGNARQGSSRS.

Belongs to the universal ribosomal protein uL4 family. Part of the 50S ribosomal subunit.

Functionally, one of the primary rRNA binding proteins, this protein initially binds near the 5'-end of the 23S rRNA. It is important during the early stages of 50S assembly. It makes multiple contacts with different domains of the 23S rRNA in the assembled 50S subunit and ribosome. In terms of biological role, forms part of the polypeptide exit tunnel. In Chlorobaculum parvum (strain DSM 263 / NCIMB 8327) (Chlorobium vibrioforme subsp. thiosulfatophilum), this protein is Large ribosomal subunit protein uL4.